We begin with the raw amino-acid sequence, 270 residues long: Diaminopimelate epimerase (270 aa).

3 residues coordinate substrate: asparagine 15, glutamine 49, and asparagine 66. Cysteine 75 (proton donor) is an active-site residue. Substrate contacts are provided by residues 76–77 (GN), asparagine 155, asparagine 187, and 204–205 (ER). Cysteine 213 acts as the Proton acceptor in catalysis. 214-215 (GS) is a binding site for substrate.

This sequence belongs to the diaminopimelate epimerase family. In terms of assembly, homodimer.

It is found in the cytoplasm. It catalyses the reaction (2S,6S)-2,6-diaminopimelate = meso-2,6-diaminopimelate. Its pathway is amino-acid biosynthesis; L-lysine biosynthesis via DAP pathway; DL-2,6-diaminopimelate from LL-2,6-diaminopimelate: step 1/1. Its function is as follows. Catalyzes the stereoinversion of LL-2,6-diaminopimelate (L,L-DAP) to meso-diaminopimelate (meso-DAP), a precursor of L-lysine and an essential component of the bacterial peptidoglycan. In Rickettsia typhi (strain ATCC VR-144 / Wilmington), this protein is Diaminopimelate epimerase.